The primary structure comprises 611 residues: Solute carrier family 23 member 3 (611 aa).

Residues 1-52 (MSRSPLHPIPLLSEGYQDTPAPLPPLLPPLQNPSSRSWASRVFGPSTWGLSC) lie on the Cytoplasmic side of the membrane. Residues 53–73 (LLALQHFLVLASLLWASHLLL) traverse the membrane as a helical segment. Residues 74–88 (LHGLPPGGLSYPPAQ) are Extracellular-facing. A helical transmembrane segment spans residues 89–109 (LLASSFFSCGLSTVLQTWMGS). The Cytoplasmic segment spans residues 110-168 (RLPLIQAPSLEFLIPALVLTNQKLPLTTKTPGNASLSLPLCSLTRSCHGLELWNTSLRE). The helical transmembrane segment at 169 to 189 (VSGAVVVSGLLQGTIGLLGVP) threads the bilayer. Topologically, residues 190 to 191 (GR) are extracellular. The helical transmembrane segment at 192 to 212 (VFPYCGPLVLAPSLVVAGLSA) threads the bilayer. Residues 213–215 (HKE) lie on the Cytoplasmic side of the membrane. Residues 216 to 236 (VAQFCSAHWGLALLLILLMVV) form a helical membrane-spanning segment. Over 237–269 (CSQHLGSCQIPLCSWRPSSTSTHICIPVFRLLS) the chain is Extracellular. The chain crosses the membrane as a helical span at residues 270–290 (VLAPVACVWFISAFVGTSVIP). Residues 291-319 (LQLSEPSDAPWFWLPHPGEWEWPLLTPRA) are Cytoplasmic-facing. The chain crosses the membrane as a helical span at residues 320–340 (LAAGISMALAASTSSLGCYAL). The Extracellular portion of the chain corresponds to 341-358 (CGQLLRLSPPPPHACSRG). Residues 359-379 (LSLEGLGSVLAGLLGSPLGTA) form a helical membrane-spanning segment. At 380-397 (SSFPNVGTVSLFQTGSRR) the chain is on the cytoplasmic side. A helical membrane pass occupies residues 398–417 (VAHLVGLFCMGLGLSPRLAQ). The Extracellular segment spans residues 418–426 (LFTSIPLPV). A helical transmembrane segment spans residues 427 to 449 (LGGVLGVTQAVVLSAGFSSFHLA). Topologically, residues 450-455 (DIDSGR) are cytoplasmic. Residues 456-475 (NVFIVGFSIFMALLLPRWLR) traverse the membrane as a helical segment. The Extracellular portion of the chain corresponds to 476-489 (EAPVLLNTGWSPLD). Residues 490–510 (MFLRSLLAEPIFLAGLLGFLL) form a helical membrane-spanning segment. The Cytoplasmic segment spans residues 511 to 611 (ENTISGTRAE…TASREGVRSQ (101 aa)). Residues 574 to 611 (PEDSGDEGGSSKTGERADLLPNSGESYSTASREGVRSQ) are disordered. Positions 596-605 (SGESYSTASR) are enriched in polar residues.

This sequence belongs to the nucleobase:cation symporter-2 (NCS2) (TC 2.A.40) family.

The protein resides in the membrane. The protein localises to the cytoplasm. The enzyme catalyses hypoxanthine(out) + Na(+)(out) = hypoxanthine(in) + Na(+)(in). Functionally, acts as a sodium-dependent hypoxanthine transporter. May show xanthine-hypoxanthine exchange activity. The protein is Solute carrier family 23 member 3 (Slc23a3) of Mus musculus (Mouse).